Here is a 397-residue protein sequence, read N- to C-terminus: Protein Brevis radix-like 1 (397 aa).

Disordered regions lie at residues 14-37 (GAPPLREQSDDADDAAVARGAGEC) and 105-148 (RAGS…EDDE). The segment covering 124–148 (AGDEEEEEEEEEEEGTTADGSEDDE) has biased composition (acidic residues). Positions 150–205 (KEWVAQVEPGVLITFLSLPEGGNDLKRIRFSREIFNKWQAQRWWAENYEKVMELYN) constitute a BRX 1 domain. 2 disordered regions span residues 212–278 (QTPL…QQHH) and 300–342 (SISG…DQER). The segment covering 220–230 (KSEDESLKEDI) has biased composition (basic and acidic residues). Positions 309–320 (SSMDASMRSSSS) are enriched in low complexity. In terms of domain architecture, BRX 2 spans 342–397 (REWVEEDEPGVYITIRALPGGIRELRRVRFSREKFSEMHARLWWEENRARIHDQYL).

It belongs to the BRX family.

It localises to the nucleus. This chain is Protein Brevis radix-like 1 (BRXL1), found in Oryza sativa subsp. japonica (Rice).